Consider the following 340-residue polypeptide: Flap endonuclease 1 (340 aa).

The tract at residues 1–98 is N-domain; sequence MGVDLGGLVE…ETIKARAEVR (98 aa). Mg(2+)-binding residues include D27, D80, E151, E153, D172, D174, and D235. An I-domain region spans residues 115–256; it reads EAYKYAQAST…TALKLVKKHG (142 aa). Residues 332 to 340 are interaction with PCNA; that stretch reads KQKTLSSWF.

The protein belongs to the XPG/RAD2 endonuclease family. FEN1 subfamily. As to quaternary structure, interacts with PCNA. PCNA stimulates the nuclease activity without altering cleavage specificity. Mg(2+) is required as a cofactor.

Functionally, structure-specific nuclease with 5'-flap endonuclease and 5'-3' exonuclease activities involved in DNA replication and repair. During DNA replication, cleaves the 5'-overhanging flap structure that is generated by displacement synthesis when DNA polymerase encounters the 5'-end of a downstream Okazaki fragment. Binds the unpaired 3'-DNA end and kinks the DNA to facilitate 5' cleavage specificity. Cleaves one nucleotide into the double-stranded DNA from the junction in flap DNA, leaving a nick for ligation. Also involved in the base excision repair (BER) pathway. Acts as a genome stabilization factor that prevents flaps from equilibrating into structures that lead to duplications and deletions. Also possesses 5'-3' exonuclease activity on nicked or gapped double-stranded DNA. The chain is Flap endonuclease 1 from Methanocella arvoryzae (strain DSM 22066 / NBRC 105507 / MRE50).